We begin with the raw amino-acid sequence, 200 residues long: NADH-quinone oxidoreductase subunit C (200 aa).

This sequence belongs to the complex I 30 kDa subunit family. As to quaternary structure, NDH-1 is composed of 14 different subunits. Subunits NuoB, C, D, E, F, and G constitute the peripheral sector of the complex.

It localises to the cell inner membrane. The catalysed reaction is a quinone + NADH + 5 H(+)(in) = a quinol + NAD(+) + 4 H(+)(out). Functionally, NDH-1 shuttles electrons from NADH, via FMN and iron-sulfur (Fe-S) centers, to quinones in the respiratory chain. The immediate electron acceptor for the enzyme in this species is believed to be ubiquinone. Couples the redox reaction to proton translocation (for every two electrons transferred, four hydrogen ions are translocated across the cytoplasmic membrane), and thus conserves the redox energy in a proton gradient. The sequence is that of NADH-quinone oxidoreductase subunit C from Burkholderia ambifaria (strain MC40-6).